The following is a 122-amino-acid chain: MIQVQTRLQVADNTGAKELMCIKVLGGSWRRYANIGDVIVCSVKEASPGGVVKKGDVVRAVVVRTKKGLRREDGSYIRFDENAAVILKDDKEPRGTRIFGPVARELRDKEFMKIISLAPEVL.

Belongs to the universal ribosomal protein uL14 family. As to quaternary structure, part of the 50S ribosomal subunit. Forms a cluster with proteins L3 and L19. In the 70S ribosome, L14 and L19 interact and together make contacts with the 16S rRNA in bridges B5 and B8.

Functionally, binds to 23S rRNA. Forms part of two intersubunit bridges in the 70S ribosome. This is Large ribosomal subunit protein uL14 from Symbiobacterium thermophilum (strain DSM 24528 / JCM 14929 / IAM 14863 / T).